Consider the following 250-residue polypeptide: Flavin-dependent thymidylate synthase (250 aa).

One can recognise a ThyX domain in the interval 7–233; sequence LRVQLIAKTE…PQVFSDFEIT (227 aa). FAD is bound by residues Ser71, 95-97, and Gln103; that span reads RHR. Residues 92-95, 103-107, and Arg172 contribute to the dUMP site; these read ELIR and QLSQR. Residues 95–105 carry the ThyX motif motif; the sequence is RHRHFSYSQLS. FAD-binding positions include 188–190 and His194; that span reads NYR. A dUMP-binding site is contributed by Arg199. Residue Arg199 is the Involved in ionization of N3 of dUMP, leading to its activation of the active site.

The protein belongs to the thymidylate synthase ThyX family. In terms of assembly, homotetramer. It depends on FAD as a cofactor.

It catalyses the reaction dUMP + (6R)-5,10-methylene-5,6,7,8-tetrahydrofolate + NADPH + H(+) = dTMP + (6S)-5,6,7,8-tetrahydrofolate + NADP(+). The protein operates within pyrimidine metabolism; dTTP biosynthesis. Catalyzes the reductive methylation of 2'-deoxyuridine-5'-monophosphate (dUMP) to 2'-deoxythymidine-5'-monophosphate (dTMP) while utilizing 5,10-methylenetetrahydrofolate (mTHF) as the methyl donor, and NADPH and FADH(2) as the reductant. This chain is Flavin-dependent thymidylate synthase, found in Mycolicibacterium gilvum (strain PYR-GCK) (Mycobacterium gilvum (strain PYR-GCK)).